The chain runs to 250 residues: NAD(P)H-quinone oxidoreductase subunit K (250 aa).

[4Fe-4S] cluster is bound by residues Cys63, Cys64, Cys128, and Cys159.

The protein belongs to the complex I 20 kDa subunit family. NDH-1 can be composed of about 15 different subunits; different subcomplexes with different compositions have been identified which probably have different functions. The cofactor is [4Fe-4S] cluster.

The protein resides in the cellular thylakoid membrane. The enzyme catalyses a plastoquinone + NADH + (n+1) H(+)(in) = a plastoquinol + NAD(+) + n H(+)(out). It catalyses the reaction a plastoquinone + NADPH + (n+1) H(+)(in) = a plastoquinol + NADP(+) + n H(+)(out). Its function is as follows. NDH-1 shuttles electrons from an unknown electron donor, via FMN and iron-sulfur (Fe-S) centers, to quinones in the respiratory and/or the photosynthetic chain. The immediate electron acceptor for the enzyme in this species is believed to be plastoquinone. Couples the redox reaction to proton translocation, and thus conserves the redox energy in a proton gradient. Cyanobacterial NDH-1 also plays a role in inorganic carbon-concentration. The sequence is that of NAD(P)H-quinone oxidoreductase subunit K from Rippkaea orientalis (strain PCC 8801 / RF-1) (Cyanothece sp. (strain PCC 8801)).